The following is a 215-amino-acid chain: N-(5'-phosphoribosyl)anthranilate isomerase (215 aa).

It belongs to the TrpF family.

The enzyme catalyses N-(5-phospho-beta-D-ribosyl)anthranilate = 1-(2-carboxyphenylamino)-1-deoxy-D-ribulose 5-phosphate. It participates in amino-acid biosynthesis; L-tryptophan biosynthesis; L-tryptophan from chorismate: step 3/5. This Rippkaea orientalis (strain PCC 8801 / RF-1) (Cyanothece sp. (strain PCC 8801)) protein is N-(5'-phosphoribosyl)anthranilate isomerase.